The sequence spans 668 residues: DNA ligase (668 aa).

Residues 32–36 (DSEYD), 81–82 (SL), and Glu110 contribute to the NAD(+) site. Lys112 serves as the catalytic N6-AMP-lysine intermediate. 4 residues coordinate NAD(+): Arg133, Glu167, Lys283, and Lys307. The Zn(2+) site is built by Cys401, Cys404, Cys419, and Cys424. In terms of domain architecture, BRCT spans 586–668 (QTDSEFNGKT…IQKQKEVENK (83 aa)).

Belongs to the NAD-dependent DNA ligase family. LigA subfamily. It depends on Mg(2+) as a cofactor. The cofactor is Mn(2+).

The catalysed reaction is NAD(+) + (deoxyribonucleotide)n-3'-hydroxyl + 5'-phospho-(deoxyribonucleotide)m = (deoxyribonucleotide)n+m + AMP + beta-nicotinamide D-nucleotide.. In terms of biological role, DNA ligase that catalyzes the formation of phosphodiester linkages between 5'-phosphoryl and 3'-hydroxyl groups in double-stranded DNA using NAD as a coenzyme and as the energy source for the reaction. It is essential for DNA replication and repair of damaged DNA. The chain is DNA ligase from Staphylococcus carnosus (strain TM300).